The following is a 293-amino-acid chain: Protease HtpX (293 aa).

A run of 2 helical transmembrane segments spans residues 4–24 (IGLF…VLSL) and 38–58 (LTNL…ISLF). H145 contacts Zn(2+). E146 is a catalytic residue. A Zn(2+)-binding site is contributed by H149. 2 helical membrane-spanning segments follow: residues 156-176 (ITLS…ARII) and 193-213 (IAFF…ASMI). Zn(2+) is bound at residue E222.

It belongs to the peptidase M48B family. Zn(2+) is required as a cofactor.

The protein resides in the cell inner membrane. The polypeptide is Protease HtpX (Cellvibrio japonicus (strain Ueda107) (Pseudomonas fluorescens subsp. cellulosa)).